The primary structure comprises 357 residues: MSKQILILPGDGIGHEIVAEAVKVLEHVNVRHTLNLRLSFDALGGAAYEKYGSPLADETLARARDADAVLLGAVGGPQWDTIDPALRPERGLLKIRAQLGLFANLRPALLYPQLADASTLKPEVVAGLDILIVRELTGGLYFGQPRGSRISKNGEREAFDTLPYCESEIRRILKVGFEMARLRGKKLCSVDKANVLASSQLWRTVAGEMAKDYPDVTLSHMYVDNAAMQLVRHPKQFDVIVTENMFGDILSDQASMLTGSIGMLPSASLDANNKGMYEPCHGSAPDIAGQGVANPLATILSVAMLLRYSMGHIKTADAIEHAVGVVLDSGLRTADIWSEGMTKVGTVAMGDAVVAAL.

Residue 76-89 coordinates NAD(+); the sequence is GPQWDTIDPALRPE. 4 residues coordinate substrate: arginine 96, arginine 106, arginine 134, and aspartate 224. Residues aspartate 224, aspartate 248, and aspartate 252 each contribute to the Mg(2+) site. NAD(+) is bound at residue 282 to 294; it reads GSAPDIAGQGVAN.

Belongs to the isocitrate and isopropylmalate dehydrogenases family. LeuB type 1 subfamily. Homodimer. Mg(2+) serves as cofactor. Mn(2+) is required as a cofactor.

The protein localises to the cytoplasm. It carries out the reaction (2R,3S)-3-isopropylmalate + NAD(+) = 4-methyl-2-oxopentanoate + CO2 + NADH. It functions in the pathway amino-acid biosynthesis; L-leucine biosynthesis; L-leucine from 3-methyl-2-oxobutanoate: step 3/4. Functionally, catalyzes the oxidation of 3-carboxy-2-hydroxy-4-methylpentanoate (3-isopropylmalate) to 3-carboxy-4-methyl-2-oxopentanoate. The product decarboxylates to 4-methyl-2 oxopentanoate. The protein is 3-isopropylmalate dehydrogenase of Xylella fastidiosa (strain 9a5c).